Reading from the N-terminus, the 1202-residue chain is CHD3-type chromatin-remodeling factor CHR7 (1202 aa).

Chromo domains follow at residues 45–109 (GEIE…HPHL) and 142–201 (KTVD…RDKY). The 169-residue stretch at 237–405 (RYSWSKKTNV…FALMHFLDAD (169 aa)) folds into the Helicase ATP-binding domain. 250–257 (DEMGLGKT) serves as a coordination point for ATP. The short motif at 356-359 (DEGH) is the DEAH box element. Residues 528 to 679 (LLDKMMVKLK…HLVVGKQHLC (152 aa)) form the Helicase C-terminal domain. A disordered region spans residues 838–872 (TSDEEEEADEPEAARQRKPRTVTRPYRKRARDNSE). Residues 853–867 (QRKPRTVTRPYRKRA) are compositionally biased toward basic residues.

It belongs to the SNF2/RAD54 helicase family.

It localises to the nucleus. Its function is as follows. Chromatin remodeling factor that represses the expression of embryonic trait genes upon and after seed germination and thus enables the developmental switch to post-germinative growth. The sequence is that of CHD3-type chromatin-remodeling factor CHR7 from Arabidopsis thaliana (Mouse-ear cress).